The chain runs to 159 residues: Phosphopantetheine adenylyltransferase (159 aa).

Histidine 16 contributes to the ATP binding site. 3 residues coordinate substrate: lysine 40, methionine 72, and arginine 86. Residues 87–89 (GLR), glutamate 97, and 122–128 (YQYLSAS) contribute to the ATP site.

Belongs to the bacterial CoaD family. As to quaternary structure, homohexamer. Mg(2+) is required as a cofactor.

It is found in the cytoplasm. The catalysed reaction is (R)-4'-phosphopantetheine + ATP + H(+) = 3'-dephospho-CoA + diphosphate. Its pathway is cofactor biosynthesis; coenzyme A biosynthesis; CoA from (R)-pantothenate: step 4/5. Functionally, reversibly transfers an adenylyl group from ATP to 4'-phosphopantetheine, yielding dephospho-CoA (dPCoA) and pyrophosphate. This chain is Phosphopantetheine adenylyltransferase, found in Dehalococcoides mccartyi (strain CBDB1).